The sequence spans 298 residues: Lipoyl synthase (298 aa).

[4Fe-4S] cluster contacts are provided by Cys40, Cys45, Cys51, Cys67, Cys71, Cys74, and Ser280. The region spanning Ala53–Ser269 is the Radical SAM core domain.

This sequence belongs to the radical SAM superfamily. Lipoyl synthase family. [4Fe-4S] cluster serves as cofactor.

The protein resides in the cytoplasm. It catalyses the reaction [[Fe-S] cluster scaffold protein carrying a second [4Fe-4S](2+) cluster] + N(6)-octanoyl-L-lysyl-[protein] + 2 oxidized [2Fe-2S]-[ferredoxin] + 2 S-adenosyl-L-methionine + 4 H(+) = [[Fe-S] cluster scaffold protein] + N(6)-[(R)-dihydrolipoyl]-L-lysyl-[protein] + 4 Fe(3+) + 2 hydrogen sulfide + 2 5'-deoxyadenosine + 2 L-methionine + 2 reduced [2Fe-2S]-[ferredoxin]. Its pathway is protein modification; protein lipoylation via endogenous pathway; protein N(6)-(lipoyl)lysine from octanoyl-[acyl-carrier-protein]. In terms of biological role, catalyzes the radical-mediated insertion of two sulfur atoms into the C-6 and C-8 positions of the octanoyl moiety bound to the lipoyl domains of lipoate-dependent enzymes, thereby converting the octanoylated domains into lipoylated derivatives. This is Lipoyl synthase from Bacillus mycoides (strain KBAB4) (Bacillus weihenstephanensis).